A 110-amino-acid chain; its full sequence is Large ribosomal subunit protein uL22 (110 aa).

It belongs to the universal ribosomal protein uL22 family. As to quaternary structure, part of the 50S ribosomal subunit.

Its function is as follows. This protein binds specifically to 23S rRNA; its binding is stimulated by other ribosomal proteins, e.g. L4, L17, and L20. It is important during the early stages of 50S assembly. It makes multiple contacts with different domains of the 23S rRNA in the assembled 50S subunit and ribosome. Functionally, the globular domain of the protein is located near the polypeptide exit tunnel on the outside of the subunit, while an extended beta-hairpin is found that lines the wall of the exit tunnel in the center of the 70S ribosome. In Syntrophobacter fumaroxidans (strain DSM 10017 / MPOB), this protein is Large ribosomal subunit protein uL22.